A 347-amino-acid chain; its full sequence is Doublecortin domain-containing protein 2C (347 aa).

Doublecortin domains are found at residues 16-98 (KTIL…LDYI) and 136-217 (RYIN…IPYW). Residues 235–260 (KYTQTKKRVESKVKEPLQNDSVPPRS) form a disordered region. Basic and acidic residues predominate over residues 241–251 (KRVESKVKEPL).

It localises to the cell projection. Its subcellular location is the cilium. It is found in the flagellum. The protein localises to the cytoplasm. The polypeptide is Doublecortin domain-containing protein 2C (Mus musculus (Mouse)).